Here is a 424-residue protein sequence, read N- to C-terminus: Enolase (424 aa).

Q164 is a binding site for (2R)-2-phosphoglycerate. E206 (proton donor) is an active-site residue. Mg(2+)-binding residues include D243, E284, and D311. (2R)-2-phosphoglycerate is bound by residues K336, R365, S366, and K387. The Proton acceptor role is filled by K336.

It belongs to the enolase family. It depends on Mg(2+) as a cofactor.

Its subcellular location is the cytoplasm. It is found in the secreted. It localises to the cell surface. It carries out the reaction (2R)-2-phosphoglycerate = phosphoenolpyruvate + H2O. It participates in carbohydrate degradation; glycolysis; pyruvate from D-glyceraldehyde 3-phosphate: step 4/5. In terms of biological role, catalyzes the reversible conversion of 2-phosphoglycerate (2-PG) into phosphoenolpyruvate (PEP). It is essential for the degradation of carbohydrates via glycolysis. The chain is Enolase from Wolbachia sp. subsp. Drosophila simulans (strain wRi).